A 208-amino-acid polypeptide reads, in one-letter code: MNRKNLQKQAEALSRLIKHFSKSEVESLIRLYHTLVGRPGDPNTRRGIDRNTFRNILHNTFGMTDDMIMDRVFRGFDKDNDSFISVTEWVEGLSVFLHGTLEEKIKYCFGVYDLNGDGYISREEMFHMLKNSLLKQPSEEDPDEGVKDLVEIALKKMDYDHDSKLSYTDFEKAVQEENLLLEAFGTCLPDSKCIMAFERQAFTEMNDI.

3 consecutive EF-hand domains span residues 64 to 99 (TDDMIMDRVFRGFDKDNDSFISVTEWVEGLSVFLHG), 100 to 135 (TLEEKIKYCFGVYDLNGDGYISREEMFHMLKNSLLK), and 145 to 180 (GVKDLVEIALKKMDYDHDSKLSYTDFEKAVQEENLL). Ca(2+)-binding residues include D77, D79, D81, D113, N115, D117, Y119, E124, D158, D160, D162, K164, and D169.

As to quaternary structure, component of the outer dynein arm-docking complex along with ODAD1, ODAD2, ODAD3 and ODAD4.

It localises to the cytoplasm. Its subcellular location is the cytoskeleton. It is found in the cilium axoneme. The protein resides in the cell projection. The protein localises to the cilium. It localises to the flagellum. Component of the outer dynein arm-docking complex (ODA-DC) that mediates outer dynein arms (ODA) binding onto the doublet microtubule. Seems to regulate the assembly of both ODAs and their axonemal docking complex onto ciliary microtubules. Regulates ciliary and flagellar motility and is required for cilia-driven determination of body laterality. In Xenopus laevis (African clawed frog), this protein is Calaxin (clxn).